A 404-amino-acid polypeptide reads, in one-letter code: Putative glutamate--cysteine ligase 2 (404 aa).

The segment at 377-404 is disordered; sequence GPAGKRAHEGGRSFRPAAGAPMSIRGQE.

This sequence belongs to the glutamate--cysteine ligase type 2 family. YbdK subfamily.

It catalyses the reaction L-cysteine + L-glutamate + ATP = gamma-L-glutamyl-L-cysteine + ADP + phosphate + H(+). Functionally, ATP-dependent carboxylate-amine ligase which exhibits weak glutamate--cysteine ligase activity. In Pseudomonas aeruginosa (strain UCBPP-PA14), this protein is Putative glutamate--cysteine ligase 2.